Consider the following 415-residue polypeptide: uncharacterized protein (415 aa).

Positions Ser-179–Pro-199 are enriched in pro residues. Positions Ser-179–Ala-200 are disordered.

It belongs to the herpesviridae BTRF1 family.

This is an uncharacterized protein from Equus caballus (Horse).